A 47-amino-acid polypeptide reads, in one-letter code: Protein RL9A (47 aa).

The chain crosses the membrane as a helical span at residues 27 to 47 (CMIIVIMIAISIWILTYVLFL).

It is found in the host membrane. This is Protein RL9A (RL9A) from Human cytomegalovirus (strain Merlin) (HHV-5).